The sequence spans 161 residues: Allophycocyanin beta chain (161 aa).

Asn71 bears the N4-methylasparagine mark. Cys81 contacts (2R,3E)-phycocyanobilin.

The protein belongs to the phycobiliprotein family. In terms of assembly, heterodimer of an alpha and a beta chain. Contains one covalently linked phycocyanobilin chromophore.

It localises to the plastid. The protein resides in the chloroplast thylakoid membrane. Its function is as follows. Light-harvesting photosynthetic bile pigment-protein from the phycobiliprotein complex. Allophycocyanin has a maximum absorption at approximately 650 nanometers. In Aglaothamnion neglectum (Red alga), this protein is Allophycocyanin beta chain (apcB).